A 210-amino-acid chain; its full sequence is Cytochrome c oxidase subunit 2 (210 aa).

The Mitochondrial intermembrane portion of the chain corresponds to 1–20; sequence MAFILSFWMIFLLDSVIVLL. Residues 21–42 form a helical membrane-spanning segment; it reads SFVCFVCVWICALLFSTVLLVS. Residues 43–60 are Mitochondrial matrix-facing; the sequence is KLNNIYCTWDFTASKFID. Residues 61-86 traverse the membrane as a helical segment; sequence VYWFTIGGMFSLGLLLRLCLLLYFGH. Residues 87 to 210 are Mitochondrial intermembrane-facing; it reads LNFVSFDLCK…GFMPIVICFI (124 aa). 6 residues coordinate Cu cation: His-157, Cys-192, Glu-194, Cys-196, His-200, and Met-203. Glu-194 lines the Mg(2+) pocket.

It belongs to the cytochrome c oxidase subunit 2 family. Component of the cytochrome c oxidase (complex IV, CIV), a multisubunit enzyme composed of a catalytic core of 3 subunits and several supernumerary subunits. The complex exists as a monomer or a dimer and forms supercomplexes (SCs) in the inner mitochondrial membrane with ubiquinol-cytochrome c oxidoreductase (cytochrome b-c1 complex, complex III, CIII). Cu cation serves as cofactor.

The protein localises to the mitochondrion inner membrane. It catalyses the reaction 4 Fe(II)-[cytochrome c] + O2 + 8 H(+)(in) = 4 Fe(III)-[cytochrome c] + 2 H2O + 4 H(+)(out). Functionally, component of the cytochrome c oxidase, the last enzyme in the mitochondrial electron transport chain which drives oxidative phosphorylation. The respiratory chain contains 3 multisubunit complexes succinate dehydrogenase (complex II, CII), ubiquinol-cytochrome c oxidoreductase (cytochrome b-c1 complex, complex III, CIII) and cytochrome c oxidase (complex IV, CIV), that cooperate to transfer electrons derived from NADH and succinate to molecular oxygen, creating an electrochemical gradient over the inner membrane that drives transmembrane transport and the ATP synthase. Cytochrome c oxidase is the component of the respiratory chain that catalyzes the reduction of oxygen to water. Electrons originating from reduced cytochrome c in the intermembrane space (IMS) are transferred via the dinuclear copper A center (CU(A)) of subunit 2 and heme A of subunit 1 to the active site in subunit 1, a binuclear center (BNC) formed by heme A3 and copper B (CU(B)). The BNC reduces molecular oxygen to 2 water molecules using 4 electrons from cytochrome c in the IMS and 4 protons from the mitochondrial matrix. This Leishmania tarentolae (Sauroleishmania tarentolae) protein is Cytochrome c oxidase subunit 2.